Here is a 297-residue protein sequence, read N- to C-terminus: HTH-type transcriptional regulator ArgP (297 aa).

Positions 4 to 60 (PDYRTLQALDAVIRERGFERAAQKLCITQSAVSQRIKQLENMFGQPLLVRTVPPRPT) constitute an HTH lysR-type domain. Residues 21–40 (FERAAQKLCITQSAVSQRIK) constitute a DNA-binding region (H-T-H motif).

This sequence belongs to the LysR transcriptional regulatory family. As to quaternary structure, homodimer.

Functionally, controls the transcription of genes involved in arginine and lysine metabolism. This chain is HTH-type transcriptional regulator ArgP, found in Escherichia fergusonii (strain ATCC 35469 / DSM 13698 / CCUG 18766 / IAM 14443 / JCM 21226 / LMG 7866 / NBRC 102419 / NCTC 12128 / CDC 0568-73).